A 339-amino-acid polypeptide reads, in one-letter code: MKVYYDADCDLNLITDKKIAILGYGSQGHAHAQNLRDSGVKDVAIALRPGSASAKKAEAAGFKVLANADAAAWADILMILAPDEHQAAIYADDLHANMKPGAALAFAHGLNIHFGLIEARADIDVIMIAPKGPGHTVRSEYQRGGGVPCLIAVHQNVTGNAHDVALAYASGVGGGRSGIIETNFREECETDLFGEQVVLCGGTTALIQAGFETLVEAGYAPEMAYFECLHELKLIVDLLYEGGIANMRYSISNTAEYGDIKTGPRIITEETKKEMKRVLADIQEGRFVKDFVLDNRAGQPELKAARGLAKRHQIEETGAKLRAMMPWIGANKLVDQTKN.

The region spanning 1 to 182 is the KARI N-terminal Rossmann domain; it reads MKVYYDADCD…GGGRSGIIET (182 aa). NADP(+)-binding positions include 24 to 27, Arg48, Ser51, Ser53, and 83 to 86; these read YGSQ and DEHQ. The active site involves His108. Gly134 is an NADP(+) binding site. The KARI C-terminal knotted domain occupies 183-328; the sequence is NFREECETDL…AKLRAMMPWI (146 aa). The Mg(2+) site is built by Asp191, Glu195, Glu227, and Glu231. Ser252 lines the substrate pocket.

This sequence belongs to the ketol-acid reductoisomerase family. The cofactor is Mg(2+).

The enzyme catalyses (2R)-2,3-dihydroxy-3-methylbutanoate + NADP(+) = (2S)-2-acetolactate + NADPH + H(+). It carries out the reaction (2R,3R)-2,3-dihydroxy-3-methylpentanoate + NADP(+) = (S)-2-ethyl-2-hydroxy-3-oxobutanoate + NADPH + H(+). Its pathway is amino-acid biosynthesis; L-isoleucine biosynthesis; L-isoleucine from 2-oxobutanoate: step 2/4. The protein operates within amino-acid biosynthesis; L-valine biosynthesis; L-valine from pyruvate: step 2/4. Its function is as follows. Involved in the biosynthesis of branched-chain amino acids (BCAA). Catalyzes an alkyl-migration followed by a ketol-acid reduction of (S)-2-acetolactate (S2AL) to yield (R)-2,3-dihydroxy-isovalerate. In the isomerase reaction, S2AL is rearranged via a Mg-dependent methyl migration to produce 3-hydroxy-3-methyl-2-ketobutyrate (HMKB). In the reductase reaction, this 2-ketoacid undergoes a metal-dependent reduction by NADPH to yield (R)-2,3-dihydroxy-isovalerate. This chain is Ketol-acid reductoisomerase (NADP(+)), found in Novosphingobium aromaticivorans (strain ATCC 700278 / DSM 12444 / CCUG 56034 / CIP 105152 / NBRC 16084 / F199).